A 103-amino-acid chain; its full sequence is Putative double-stranded DNA mimic protein HD_0986 (103 aa).

Belongs to the putative dsDNA mimic protein family.

Functionally, may act as a double-stranded DNA (dsDNA) mimic. Probably regulates the activity of a dsDNA-binding protein. In Haemophilus ducreyi (strain 35000HP / ATCC 700724), this protein is Putative double-stranded DNA mimic protein HD_0986.